The sequence spans 70 residues: Protein FlmC homolog (70 aa).

Residues 1–21 are disordered; the sequence is MSSPHQDSLLPRFAQGEEGHE.

This chain is Protein FlmC homolog, found in Escherichia coli.